Here is a 188-residue protein sequence, read N- to C-terminus: Molybdopterin synthase catalytic subunit (188 aa).

Positions 1 to 14 (MATQPPQDQTSTTP) are enriched in low complexity. Residues 1–23 (MATQPPQDQTSTTPSLPPHLDPT) are disordered. Substrate contacts are provided by residues 134-135 (HR), K150, and 157-159 (KRE).

This sequence belongs to the MoaE family. MOCS2B subfamily. In terms of assembly, heterotetramer; composed of 2 small (MOCS2A) and 2 large (MOCS2B) subunits.

The protein localises to the cytoplasm. It catalyses the reaction 2 [molybdopterin-synthase sulfur-carrier protein]-C-terminal-Gly-aminoethanethioate + cyclic pyranopterin phosphate + H2O = molybdopterin + 2 [molybdopterin-synthase sulfur-carrier protein]-C-terminal Gly-Gly + 2 H(+). The protein operates within cofactor biosynthesis; molybdopterin biosynthesis. Catalytic subunit of the molybdopterin synthase complex, a complex that catalyzes the conversion of precursor Z into molybdopterin. Acts by mediating the incorporation of 2 sulfur atoms from thiocarboxylated MOCS2A into precursor Z to generate a dithiolene group. This is Molybdopterin synthase catalytic subunit from Aspergillus fumigatus (strain ATCC MYA-4609 / CBS 101355 / FGSC A1100 / Af293) (Neosartorya fumigata).